Here is a 794-residue protein sequence, read N- to C-terminus: EVI5-like protein (794 aa).

Polar residues predominate over residues M1–L30. 2 disordered regions span residues M1–E36 and E49–A75. Low complexity predominate over residues M55 to A75. The Rab-GAP TBC domain occupies G115–G300. 2 coiled-coil regions span residues K358–N449 and E569–P709. S685 is subject to Phosphoserine. Residues L766–N794 form a disordered region.

May interact with RAB10.

Functions as a GTPase-activating protein (GAP) with a broad specificity. The protein is EVI5-like protein (EVI5L) of Homo sapiens (Human).